Consider the following 314-residue polypeptide: tRNA dimethylallyltransferase 2 (314 aa).

Residue G8–S15 participates in ATP binding. Residue T10 to S15 participates in substrate binding.

It belongs to the IPP transferase family. Monomer. It depends on Mg(2+) as a cofactor.

It catalyses the reaction adenosine(37) in tRNA + dimethylallyl diphosphate = N(6)-dimethylallyladenosine(37) in tRNA + diphosphate. Functionally, catalyzes the transfer of a dimethylallyl group onto the adenine at position 37 in tRNAs that read codons beginning with uridine, leading to the formation of N6-(dimethylallyl)adenosine (i(6)A). The protein is tRNA dimethylallyltransferase 2 of Mycobacterium marinum (strain ATCC BAA-535 / M).